A 401-amino-acid chain; its full sequence is NADH-quinone oxidoreductase subunit D (401 aa).

It belongs to the complex I 49 kDa subunit family. As to quaternary structure, NDH-1 is composed of 14 different subunits. Subunits NuoB, C, D, E, F, and G constitute the peripheral sector of the complex.

It localises to the cell inner membrane. The enzyme catalyses a quinone + NADH + 5 H(+)(in) = a quinol + NAD(+) + 4 H(+)(out). In terms of biological role, NDH-1 shuttles electrons from NADH, via FMN and iron-sulfur (Fe-S) centers, to quinones in the respiratory chain. The immediate electron acceptor for the enzyme in this species is believed to be ubiquinone. Couples the redox reaction to proton translocation (for every two electrons transferred, four hydrogen ions are translocated across the cytoplasmic membrane), and thus conserves the redox energy in a proton gradient. The protein is NADH-quinone oxidoreductase subunit D of Rhodopseudomonas palustris (strain HaA2).